A 295-amino-acid polypeptide reads, in one-letter code: Ribosomal RNA small subunit methyltransferase A (295 aa).

S-adenosyl-L-methionine-binding residues include Asn31, Leu33, Gly58, Glu79, Asp104, and Asn129.

Belongs to the class I-like SAM-binding methyltransferase superfamily. rRNA adenine N(6)-methyltransferase family. RsmA subfamily.

It is found in the cytoplasm. It catalyses the reaction adenosine(1518)/adenosine(1519) in 16S rRNA + 4 S-adenosyl-L-methionine = N(6)-dimethyladenosine(1518)/N(6)-dimethyladenosine(1519) in 16S rRNA + 4 S-adenosyl-L-homocysteine + 4 H(+). In terms of biological role, specifically dimethylates two adjacent adenosines (A1518 and A1519) in the loop of a conserved hairpin near the 3'-end of 16S rRNA in the 30S particle. May play a critical role in biogenesis of 30S subunits. This chain is Ribosomal RNA small subunit methyltransferase A, found in Enterococcus faecalis (strain ATCC 700802 / V583).